Reading from the N-terminus, the 240-residue chain is 3-dehydroquinate dehydratase (240 aa).

Residues Ser15, 42 to 44, and Arg73 contribute to the 3-dehydroquinate site; that span reads EWR. His132 serves as the catalytic Proton donor/acceptor. Catalysis depends on Lys160, which acts as the Schiff-base intermediate with substrate. 3 residues coordinate 3-dehydroquinate: Arg202, Ser221, and Gln225.

Belongs to the type-I 3-dehydroquinase family. Homodimer.

The enzyme catalyses 3-dehydroquinate = 3-dehydroshikimate + H2O. Its pathway is metabolic intermediate biosynthesis; chorismate biosynthesis; chorismate from D-erythrose 4-phosphate and phosphoenolpyruvate: step 3/7. Involved in the third step of the chorismate pathway, which leads to the biosynthesis of aromatic amino acids. Catalyzes the cis-dehydration of 3-dehydroquinate (DHQ) and introduces the first double bond of the aromatic ring to yield 3-dehydroshikimate. This is 3-dehydroquinate dehydratase from Latilactobacillus sakei subsp. sakei (strain 23K) (Lactobacillus sakei subsp. sakei).